We begin with the raw amino-acid sequence, 450 residues long: MVPLVAVVSGPRAQLFACLLRLGTQQVGPLQLHTGASHAARNHYEVLVLGGGSGGITMAARMKRKVGAENVAIVEPSERHFYQPIWTLVGAGAKQLSSSGRPTASVIPSGVEWIKARVTELNPDKNCIHTDDDEKISYRYLIIALGIQLDYEKIKGLPEGFAHPKIGSNYSVKTVEKTWKALQDFKEGNAIFTFPNTPVKCAGAPQKIMYLSEAYFRKTGKRSKANIIFNTSLGAIFGVKKYADALQEIIQERNLTVNYKKNLIEVRADKQEAVFENLDKPGETQVISYEMLHVTPPMSPPDVLKTSPVADAAGWVDVDKETLQHRRYPNVFGIGDCTNLPTSKTAAAVAAQSGILDRTISVIMKNQTPTKKYDGYTSCPLVTGYNRVILAEFDYKAEPLETFPFDQSKERLSMYLMKADLMPFLYWNMMLRGYWGGPAFLRKLFHLGMS.

Residues 53-54 (SG), Glu-75, Gln-83, and Val-118 contribute to the FAD site. Residue Lys-173 is modified to N6-acetyllysine. The active-site Cysteine persulfide intermediate is the Cys-201. Cysteines 201 and 379 form a disulfide. Asp-336 lines the FAD pocket. The residue at position 343 (Ser-343) is a Phosphoserine. 344 to 347 (KTAA) is a binding site for FAD. Cys-379 serves as the catalytic Cysteine persulfide intermediate.

It belongs to the SQRD family. It depends on FAD as a cofactor.

It localises to the mitochondrion. It catalyses the reaction ubiquinone-10 + hydrogen sulfide + sulfite + 2 H(+) = ubiquinol-10 + thiosulfate. The catalysed reaction is a quinone + hydrogen sulfide + glutathione + H(+) = S-sulfanylglutathione + a quinol. It carries out the reaction ubiquinone-10 + hydrogen sulfide + glutathione + H(+) = S-sulfanylglutathione + ubiquinol-10. Catalyzes the oxidation of hydrogen sulfide with the help of a quinone, such as ubiquinone-10, giving rise to thiosulfate and ultimately to sulfane (molecular sulfur) atoms. Requires an additional electron acceptor; can use sulfite, sulfide or cyanide (in vitro). It is believed the in vivo electron acceptor is glutathione. The protein is Sulfide:quinone oxidoreductase, mitochondrial of Homo sapiens (Human).